The following is a 244-amino-acid chain: Probable transcriptional regulatory protein BT0025 (244 aa).

This sequence belongs to the TACO1 family.

It localises to the cytoplasm. The chain is Probable transcriptional regulatory protein BT0025 from Borrelia turicatae (strain 91E135).